Reading from the N-terminus, the 102-residue chain is Citrate lyase acyl carrier protein (102 aa).

O-(phosphoribosyl dephospho-coenzyme A)serine is present on Ser-14.

It belongs to the CitD family. As to quaternary structure, oligomer with a subunit composition of (alpha,beta,gamma)6.

It is found in the cytoplasm. In terms of biological role, covalent carrier of the coenzyme of citrate lyase. The sequence is that of Citrate lyase acyl carrier protein from Streptococcus equi subsp. equi (strain 4047).